The following is a 290-amino-acid chain: ATP synthase gamma chain (290 aa).

The protein belongs to the ATPase gamma chain family. In terms of assembly, F-type ATPases have 2 components, CF(1) - the catalytic core - and CF(0) - the membrane proton channel. CF(1) has five subunits: alpha(3), beta(3), gamma(1), delta(1), epsilon(1). CF(0) has three main subunits: a, b and c.

The protein localises to the cell inner membrane. Produces ATP from ADP in the presence of a proton gradient across the membrane. The gamma chain is believed to be important in regulating ATPase activity and the flow of protons through the CF(0) complex. The polypeptide is ATP synthase gamma chain (Chelativorans sp. (strain BNC1)).